The chain runs to 125 residues: Holo-[acyl-carrier-protein] synthase (125 aa).

The Mg(2+) site is built by Asp-8 and Glu-57.

Belongs to the P-Pant transferase superfamily. AcpS family. Mg(2+) is required as a cofactor.

It is found in the cytoplasm. It catalyses the reaction apo-[ACP] + CoA = holo-[ACP] + adenosine 3',5'-bisphosphate + H(+). Its function is as follows. Transfers the 4'-phosphopantetheine moiety from coenzyme A to a Ser of acyl-carrier-protein. In Blochmanniella pennsylvanica (strain BPEN), this protein is Holo-[acyl-carrier-protein] synthase.